The sequence spans 494 residues: Glutamyl-tRNA(Gln) amidotransferase subunit A (494 aa).

Active-site charge relay system residues include Lys78 and Ser158. Residue Ser182 is the Acyl-ester intermediate of the active site.

This sequence belongs to the amidase family. GatA subfamily. Heterotrimer of A, B and C subunits.

The catalysed reaction is L-glutamyl-tRNA(Gln) + L-glutamine + ATP + H2O = L-glutaminyl-tRNA(Gln) + L-glutamate + ADP + phosphate + H(+). In terms of biological role, allows the formation of correctly charged Gln-tRNA(Gln) through the transamidation of misacylated Glu-tRNA(Gln) in organisms which lack glutaminyl-tRNA synthetase. The reaction takes place in the presence of glutamine and ATP through an activated gamma-phospho-Glu-tRNA(Gln). The polypeptide is Glutamyl-tRNA(Gln) amidotransferase subunit A (Jannaschia sp. (strain CCS1)).